The following is a 110-amino-acid chain: U1-lycotoxin-Ls1kk (110 aa).

The first 20 residues, 1-20 (MKFVLLFGVLLVTLFSYSSA), serve as a signal peptide directing secretion. Residues 21–44 (EMFDDFDQADEDELLSLIEKEEAR) constitute a propeptide that is removed on maturation. 4 disulfide bridges follow: C47/C62, C54/C71, C61/C89, and C73/C87.

The protein belongs to the neurotoxin 19 (CSTX) family. 03 subfamily. Expressed by the venom gland.

It localises to the secreted. In Lycosa singoriensis (Wolf spider), this protein is U1-lycotoxin-Ls1kk.